The chain runs to 1211 residues: Diacylglycerol kinase eta (1211 aa).

A disordered region spans residues 1 to 66 (MAGAGSQHHP…QMRTKTSIKE (66 aa)). A compositionally biased stretch (low complexity) spans 19–32 (AGASAVSPTAAGPG). Positions 52–61 (VSTSGQMRTK) are enriched in polar residues. Positions 62–155 (TSIKEGQLLK…WISSLKSVQS (94 aa)) constitute a PH domain. Phorbol-ester/DAG-type zinc fingers lie at residues 172 to 222 (MHNW…TNNC) and 244 to 295 (PHQW…HPVC). The DAGKc domain maps to 325 to 460 (FCVSPLLVFV…LDRWSIMTYE (136 aa)). 2 disordered regions span residues 562 to 613 (SQAS…KPRE) and 634 to 694 (KVMD…SVAG). Composition is skewed to acidic residues over residues 576-589 (PEED…DESL) and 653-662 (YDTETDEAKE). The segment covering 670–691 (SAKTTSQSPDAQASCGHPQTDS) has biased composition (polar residues). Positions 1143 to 1206 (WGTEEVAAWL…LQGIKELERN (64 aa)) constitute an SAM domain.

It belongs to the eukaryotic diacylglycerol kinase family. As to quaternary structure, interacts with RAF1 and BRAF. In terms of assembly, homooligomers. Heterooligomers. Oligomerization through the SAM domain inhibits the diacylglycerol kinase activity. Heterooligomerizes with SAM domain-containing isoforms of DGKD. Does not form homooligomers. Phosphorylated. Phosphorylation does not inhibit catalytic activity. In terms of tissue distribution, widely expressed. Detected in the granulosa cells of the primary and secondary follicles. Expressed in mature follicles and corpus lutea. Expressed in the oviductal epithelium. In the uterus, strongly expressed in the luminal epithelium. Detected in the uterine glands. Detected in ovary and uterus (at protein level). As to expression, specifically expressed in testis. Detected in the inner area of the testis. Strongly expressed in the secondary spermatocytes and the round spermatids and weakly detected in the primary spermatocytes.

It is found in the cytoplasm. The protein resides in the cell membrane. It localises to the cytoskeleton. It catalyses the reaction a 1,2-diacyl-sn-glycerol + ATP = a 1,2-diacyl-sn-glycero-3-phosphate + ADP + H(+). The enzyme catalyses 1,2-di-(9Z-octadecenoyl)-sn-glycerol + ATP = 1,2-di-(9Z-octadecenoyl)-sn-glycero-3-phosphate + ADP + H(+). Its pathway is lipid metabolism; glycerolipid metabolism. Its function is as follows. Diacylglycerol kinase that converts diacylglycerol/DAG into phosphatidic acid/phosphatidate/PA and regulates the respective levels of these two bioactive lipids. Thereby, acts as a central switch between the signaling pathways activated by these second messengers with different cellular targets and opposite effects in numerous biological processes. Plays a key role in promoting cell growth. Activates the Ras/B-Raf/C-Raf/MEK/ERK signaling pathway induced by EGF. Regulates the recruitment of RAF1 and BRAF from cytoplasm to membranes and their heterodimerization. This is Diacylglycerol kinase eta from Mus musculus (Mouse).